The chain runs to 136 residues: MSLTLRVLATDQNVFDGSADEVILPSTTGQLGILPGHISLLTAIDIGVLRVRANGAWNSIALMGGFAEVDADEVTVLVNKAELGSSIDAAAAETAFQKATIMVAGMEGQPSSPEKLKAQQQLNEARARLQASKTAD.

The segment at 106–136 is disordered; that stretch reads MEGQPSSPEKLKAQQQLNEARARLQASKTAD.

Belongs to the ATPase epsilon chain family. In terms of assembly, F-type ATPases have 2 components, CF(1) - the catalytic core - and CF(0) - the membrane proton channel. CF(1) has five subunits: alpha(3), beta(3), gamma(1), delta(1), epsilon(1). CF(0) has three main subunits: a, b and c.

The protein localises to the cellular thylakoid membrane. Its function is as follows. Produces ATP from ADP in the presence of a proton gradient across the membrane. The protein is ATP synthase epsilon chain of Synechococcus sp. (strain CC9605).